Reading from the N-terminus, the 32-residue chain is MAKEIFSIAAVFWILIPIGLVGGALLLKFQGD.

The chain crosses the membrane as a helical span at residues 9-27 (AAVFWILIPIGLVGGALLL).

This sequence belongs to the PetM family. As to quaternary structure, the 4 large subunits of the cytochrome b6-f complex are cytochrome b6, subunit IV (17 kDa polypeptide, PetD), cytochrome f and the Rieske protein, while the 4 small subunits are PetG, PetL, PetM and PetN. The complex functions as a dimer.

Its subcellular location is the cellular thylakoid membrane. In terms of biological role, component of the cytochrome b6-f complex, which mediates electron transfer between photosystem II (PSII) and photosystem I (PSI), cyclic electron flow around PSI, and state transitions. The chain is Cytochrome b6-f complex subunit 7 from Prochlorococcus marinus (strain MIT 9515).